The sequence spans 508 residues: Protein O-glucosyltransferase 3 (508 aa).

A signal peptide spans 1-24 (MLGVRRALLLPPLQLALLVAAGTG). One copy of the Filamin repeat lies at 25–134 (ARVSAPRSLA…VAQSPYILKG (110 aa)). Asn-307 is a glycosylation site (N-linked (GlcNAc...) asparagine). Positions 480–508 (RDGMERVPQPDDSTSVRQCHRKRPEREEL) are disordered. The Prevents secretion from ER signature appears at 505-508 (REEL).

The protein belongs to the KDELC family.

The protein localises to the endoplasmic reticulum lumen. The catalysed reaction is L-seryl-[EGF-like domain protein] + UDP-alpha-D-glucose = 3-O-(beta-D-glucosyl)-L-seryl-[EGF-like domain protein] + UDP + H(+). The enzyme catalyses L-seryl-[EGF-like domain protein] + UDP-alpha-D-xylose = 3-O-(beta-D-xylosyl)-L-seryl-[EGF-like domain protein] + UDP + H(+). It functions in the pathway protein modification; protein glycosylation. Its function is as follows. Protein glucosyltransferase that catalyzes the transfer of glucose from UDP-glucose to a serine residue within the consensus sequence peptide C-X-N-T-X-G-S-F-X-C. Can also catalyze the transfer of xylose from UDP-xylose but less efficiently. Specifically targets extracellular EGF repeats of proteins such as NOTCH1, NOTCH3, FBN1, FBN2 and LTBP1. May regulate the transport of NOTCH1 and NOTCH3 to the plasma membrane and thereby the Notch signaling pathway. This is Protein O-glucosyltransferase 3 (Poglut3) from Rattus norvegicus (Rat).